A 332-amino-acid chain; its full sequence is MSRILDNEMMGDEELVERTLRPQYLREYIGQDKVKDQLQIFIEAAKMRDEALDHVLLFGPPGLGKTTMAFVIANELGVNLKQTSGPVIEKAGDLVAILNELEPGDVLFIDEIHRLPMSVEEVLYSAMEDFYIDIMIGAGEGSRSVHLELPPFTLIGATTRAGMLSNPLRARFGITGHMEYYAHADLTEIVERTADIFEMEITHEAASELALRSRGTPRIANRLLKRVRDFAQIMGNGVIDDIITDKALTMLDVDHEGLDYVDQKILRTMIEMYSGGPVGLGTLSVNIAEERETVEDMYEPYLIQKGFIMRTRSGRVATAKAYEHLGYEYSEK.

The segment at 1–181 (MSRILDNEMM…FGITGHMEYY (181 aa)) is large ATPase domain (RuvB-L). ATP-binding positions include L20, R21, G62, K65, T66, T67, 128–130 (EDF), R171, Y181, and R218. T66 is a Mg(2+) binding site. Positions 182–252 (AHADLTEIVE…ITDKALTMLD (71 aa)) are small ATPAse domain (RuvB-S). Residues 255-332 (HEGLDYVDQK…EHLGYEYSEK (78 aa)) are head domain (RuvB-H). DNA is bound by residues R291, R310, R312, and R315.

It belongs to the RuvB family. As to quaternary structure, homohexamer. Forms an RuvA(8)-RuvB(12)-Holliday junction (HJ) complex. HJ DNA is sandwiched between 2 RuvA tetramers; dsDNA enters through RuvA and exits via RuvB. An RuvB hexamer assembles on each DNA strand where it exits the tetramer. Each RuvB hexamer is contacted by two RuvA subunits (via domain III) on 2 adjacent RuvB subunits; this complex drives branch migration. In the full resolvosome a probable DNA-RuvA(4)-RuvB(12)-RuvC(2) complex forms which resolves the HJ.

The protein resides in the cytoplasm. It catalyses the reaction ATP + H2O = ADP + phosphate + H(+). In terms of biological role, the RuvA-RuvB-RuvC complex processes Holliday junction (HJ) DNA during genetic recombination and DNA repair, while the RuvA-RuvB complex plays an important role in the rescue of blocked DNA replication forks via replication fork reversal (RFR). RuvA specifically binds to HJ cruciform DNA, conferring on it an open structure. The RuvB hexamer acts as an ATP-dependent pump, pulling dsDNA into and through the RuvAB complex. RuvB forms 2 homohexamers on either side of HJ DNA bound by 1 or 2 RuvA tetramers; 4 subunits per hexamer contact DNA at a time. Coordinated motions by a converter formed by DNA-disengaged RuvB subunits stimulates ATP hydrolysis and nucleotide exchange. Immobilization of the converter enables RuvB to convert the ATP-contained energy into a lever motion, pulling 2 nucleotides of DNA out of the RuvA tetramer per ATP hydrolyzed, thus driving DNA branch migration. The RuvB motors rotate together with the DNA substrate, which together with the progressing nucleotide cycle form the mechanistic basis for DNA recombination by continuous HJ branch migration. Branch migration allows RuvC to scan DNA until it finds its consensus sequence, where it cleaves and resolves cruciform DNA. The sequence is that of Holliday junction branch migration complex subunit RuvB from Streptococcus pneumoniae serotype 19F (strain G54).